Consider the following 722-residue polypeptide: Polyribonucleotide nucleotidyltransferase (722 aa).

Residues Asp495 and Asp501 each coordinate Mg(2+). In terms of domain architecture, KH spans 562 to 621; sequence PRLLSFRIDPELIGTVIGPGGRTIKGITERTNTKIDIEDGGIVTIASHDGAAAEEAQRII. In terms of domain architecture, S1 motif spans 631–699; the sequence is GEIFPGSITR…NRGRINLTLR (69 aa). Residues 700-722 are disordered; it reads GVSQNGGMSNYPEPTPTPVAPLT. Positions 712 to 722 are enriched in pro residues; that stretch reads EPTPTPVAPLT.

It belongs to the polyribonucleotide nucleotidyltransferase family. Requires Mg(2+) as cofactor.

The protein localises to the cytoplasm. It carries out the reaction RNA(n+1) + phosphate = RNA(n) + a ribonucleoside 5'-diphosphate. Functionally, involved in mRNA degradation. Catalyzes the phosphorolysis of single-stranded polyribonucleotides processively in the 3'- to 5'-direction. The sequence is that of Polyribonucleotide nucleotidyltransferase from Prochlorococcus marinus (strain NATL1A).